The chain runs to 350 residues: Phosphotriesterase-related protein (350 aa).

Positions 24, 26, 170, 202, 231, and 299 each coordinate a divalent metal cation.

The protein belongs to the metallo-dependent hydrolases superfamily. Phosphotriesterase family. A divalent metal cation serves as cofactor.

This is Phosphotriesterase-related protein from Nematostella vectensis (Starlet sea anemone).